We begin with the raw amino-acid sequence, 966 residues long: Serine/threonine-protein kinase 10 (966 aa).

Phosphoserine occurs at positions 13 and 20. The Protein kinase domain occupies 36–294 (WEIVGELGDG…AAQLLQHPFV (259 aa)). Residues 42 to 50 (LGDGAFGKV) and Lys-65 contribute to the ATP site. Asp-157 functions as the Proton acceptor in the catalytic mechanism. The segment at 175 to 224 (DFGVSAKNLKTLQKRDSFIGTPYWMAPEVVLCETMKDAPYDYKADIWSLG) is activation segment. A Phosphothreonine; by autocatalysis modification is found at Thr-185. At Ser-191 the chain carries Phosphoserine. 2 stretches are compositionally biased toward polar residues: residues 341–363 (TQDS…DSST) and 371–392 (QEPV…TTSP). Positions 341 to 497 (TQDSANVTQP…NLSTSESMDY (157 aa)) are disordered. Basic and acidic residues predominate over residues 421–430 (IQMDEEKQIP). Residues Ser-437, Ser-449, Ser-453, and Ser-484 each carry the phosphoserine modification. The span at 438–456 (PAASKSQKANQSRPNSSAL) shows a compositional bias: polar residues. Residues 485–497 (DCSNLSTSESMDY) show a composition bias toward polar residues. Ser-513 and Ser-548 each carry phosphoserine. Positions 588–936 (LQLEQMHKRF…LNQKKREQEM (349 aa)) form a coiled coil. Disordered stretches follow at residues 660-692 (KKEV…KKQR), 826-865 (INGA…ENQM), and 901-966 (LDES…GDAS). 2 stretches are compositionally biased toward basic and acidic residues: residues 834–865 (EQRE…ENQM) and 901–946 (LDES…EAEP). Thr-950 is subject to Phosphothreonine. Polar residues predominate over residues 950–966 (TPSKASNFFPYSSGDAS).

This sequence belongs to the protein kinase superfamily. STE Ser/Thr protein kinase family. STE20 subfamily. Homodimer; homodimerization is required for activation segment autophosphorylation. Post-translationally, autophosphorylates following homodimerization, leading to activation of the protein. As to expression, expressed predominantly in lymphoid organs such as spleen, thymus, and bone marrow.

The protein localises to the cell membrane. The enzyme catalyses L-seryl-[protein] + ATP = O-phospho-L-seryl-[protein] + ADP + H(+). It catalyses the reaction L-threonyl-[protein] + ATP = O-phospho-L-threonyl-[protein] + ADP + H(+). Inhibited by the pyrrole-indolinone inhibitor SU11274 (K00593): intercalates between the ATP-binding Lys-65 and alpha-C glutamate (Glu-81), resulting in a partial disordering of the lysine side chain. Also specifically inhibited by erlotinib. Slightly inhibited by gefitinib. Serine/threonine-protein kinase involved in regulation of lymphocyte migration. Phosphorylates MSN, and possibly PLK1. Involved in regulation of lymphocyte migration by mediating phosphorylation of ERM proteins such as MSN. Acts as a negative regulator of MAP3K1/MEKK1. May also act as a cell cycle regulator by acting as a polo kinase kinase: mediates phosphorylation of PLK1 in vitro; however such data require additional evidences in vivo. This Mus musculus (Mouse) protein is Serine/threonine-protein kinase 10 (Stk10).